A 53-amino-acid polypeptide reads, in one-letter code: Rubredoxin (53 aa).

Positions 1-53 constitute a Rubredoxin-like domain; it reads MQKFECTLCGYIYDPALVGPDTPDQDGAFEDVSENWVCPLCGAGKEDFEVYED. Residues C6, C9, C38, and C41 each contribute to the Fe cation site.

This sequence belongs to the rubredoxin family. Fe(3+) serves as cofactor.

In terms of biological role, rubredoxin is a small nonheme, iron protein lacking acid-labile sulfide. Its single Fe, chelated to 4 Cys, functions as an electron acceptor and may also stabilize the conformation of the molecule. In Peptoniphilus asaccharolyticus (Peptostreptococcus asaccharolyticus), this protein is Rubredoxin.